A 358-amino-acid polypeptide reads, in one-letter code: WD repeat-containing protein 53 (358 aa).

WD repeat units lie at residues 8-47 (GHSS…GHMQ), 92-131 (VNEE…VTRS), 134-174 (RHSN…PVWI), 195-234 (LNPA…CERE), and 239-278 (GHTL…EKLQ). The disordered stretch occupies residues 288–309 (KKAKRAACPTQGGNSRAPGAED).

Belongs to the WD repeat WDR53 family.

This chain is WD repeat-containing protein 53 (Wdr53), found in Mus musculus (Mouse).